Reading from the N-terminus, the 1068-residue chain is Disheveled-associated activator of morphogenesis 2 (1068 aa).

A GBD/FH3 domain is found at 40–416; it reads SPIPNAEELN…QIVLQDERGV (377 aa). A coiled-coil region spans residues 434-516; that stretch reads MLINENEVKQ…LVAQLSELST (83 aa). The segment at 514–586 is disordered; it reads LSTGPVSSPP…MGLPLPQDPY (73 aa). Residues 518–594 enclose the FH1 domain; the sequence is PVSSPPPPGG…PYPSSDVPLR (77 aa). The segment covering 540-572 has biased composition (pro residues); sequence LPPPPPPLPFACCPPPPPPPLPPGGPPTPPGAP. Residues 595–994 enclose the FH2 domain; the sequence is KKRVPQPSHP…EERRARMEAM (400 aa). Serine 1015 carries the post-translational modification Phosphoserine. The DAD domain maps to 1016–1048; sequence SLEEGGEFDDLVSALRSGEVFDKDLCKLKRSRK.

It belongs to the formin homology family. In terms of assembly, interacts with DVL3. Interacts with INF2. Expressed in most tissues examined. Expressed in kidney glomeruli.

Its function is as follows. Key regulator of the Wnt signaling pathway, which is required for various processes during development, such as dorsal patterning, determination of left/right symmetry or myelination in the central nervous system. Acts downstream of Wnt ligands and upstream of beta-catenin (CTNNB1). Required for canonical Wnt signaling pathway during patterning in the dorsal spinal cord by promoting the aggregation of Disheveled (Dvl) complexes, thereby clustering and formation of Wnt receptor signalosomes and potentiating Wnt activity. During dorsal patterning of the spinal cord, inhibits oligodendrocytes differentiation via interaction with PIP5K1A. Also regulates non-canonical Wnt signaling pathway. Acts downstream of PITX2 in the developing gut and is required for left/right asymmetry within dorsal mesentery: affects mesenchymal condensation by lengthening cadherin-based junctions through WNT5A and non-canonical Wnt signaling, inducing polarized condensation in the left dorsal mesentery necessary to initiate gut rotation. Together with DAAM1, required for myocardial maturation and sarcomere assembly. Is a regulator of actin nucleation and elongation, filopodia formation and podocyte migration. The sequence is that of Disheveled-associated activator of morphogenesis 2 from Homo sapiens (Human).